Reading from the N-terminus, the 459-residue chain is Ribulose bisphosphate carboxylase (459 aa).

Position 111 (asparagine 111) interacts with substrate. The Proton acceptor role is filled by lysine 166. Lysine 168 serves as a coordination point for substrate. 3 residues coordinate Mg(2+): lysine 191, aspartate 193, and glutamate 194. At lysine 191 the chain carries N6-carboxylysine. Catalysis depends on histidine 287, which acts as the Proton acceptor. Substrate contacts are provided by arginine 288, histidine 321, and serine 368.

Belongs to the RuBisCO large chain family. Type II subfamily. Homodimer. Mg(2+) serves as cofactor.

It catalyses the reaction 2 (2R)-3-phosphoglycerate + 2 H(+) = D-ribulose 1,5-bisphosphate + CO2 + H2O. It carries out the reaction D-ribulose 1,5-bisphosphate + O2 = 2-phosphoglycolate + (2R)-3-phosphoglycerate + 2 H(+). Functionally, ruBisCO catalyzes two reactions: the carboxylation of D-ribulose 1,5-bisphosphate, the primary event in carbon dioxide fixation, as well as the oxidative fragmentation of the pentose substrate. Both reactions occur simultaneously and in competition at the same active site. This is Ribulose bisphosphate carboxylase from Polaromonas naphthalenivorans (strain CJ2).